The chain runs to 668 residues: DNA ligase (668 aa).

Residues 37–41 (DAVYD), 86–87 (SM), and Glu-116 contribute to the NAD(+) site. The N6-AMP-lysine intermediate role is filled by Lys-118. Residues Arg-139, Glu-173, Lys-288, and Lys-312 each contribute to the NAD(+) site. Zn(2+) contacts are provided by Cys-406, Cys-409, Cys-424, and Cys-429. Positions 590-668 (APDNFFKEKT…EQEAIAKIEK (79 aa)) constitute a BRCT domain.

It belongs to the NAD-dependent DNA ligase family. LigA subfamily. It depends on Mg(2+) as a cofactor. Mn(2+) serves as cofactor.

It catalyses the reaction NAD(+) + (deoxyribonucleotide)n-3'-hydroxyl + 5'-phospho-(deoxyribonucleotide)m = (deoxyribonucleotide)n+m + AMP + beta-nicotinamide D-nucleotide.. In terms of biological role, DNA ligase that catalyzes the formation of phosphodiester linkages between 5'-phosphoryl and 3'-hydroxyl groups in double-stranded DNA using NAD as a coenzyme and as the energy source for the reaction. It is essential for DNA replication and repair of damaged DNA. The protein is DNA ligase of Lactobacillus johnsonii (strain CNCM I-12250 / La1 / NCC 533).